A 505-amino-acid polypeptide reads, in one-letter code: Maturase K (505 aa).

The protein belongs to the intron maturase 2 family. MatK subfamily.

The protein resides in the plastid. It localises to the chloroplast. In terms of biological role, usually encoded in the trnK tRNA gene intron. Probably assists in splicing its own and other chloroplast group II introns. This chain is Maturase K, found in Gomphrena pulchella (Globe amaranth).